A 527-amino-acid polypeptide reads, in one-letter code: NADH-ubiquinone oxidoreductase chain 5 (527 aa).

14 helical membrane passes run 3–23, 43–63, 75–95, 98–118, 141–161, 168–188, 197–217, 226–246, 263–283, 318–338, 357–377, 398–418, 432–452, and 507–527; these read ISIFLIGFVFFMGGISVWLMP, FYFNSILFSFILFLVTFSVLV, FNYYYFVLLIFVGSMFSLNFS, IFTMLLSWDLLGISSFFLVLF, FMFVFFGLSVFSGYYFLSFSM, LLLLLTAFTKSAQFPFSSWLP, VSSLVHSSTLVTAGLILLMNF, FISFVLIIGLFTMFFSSLASL, MGFSMVTLGLGLSFISFIHLV, LPNFIQLQMLVTLFCLCGLIF, YMMFFSLMFFVSVFLTFGYSF, VFMNFLSLVLVIFSISFLWWM, VDFFGPLVFLFMMIFLSFLIL, and YLKSLNFNSVVVLIFIFFMIC.

It belongs to the complex I subunit 5 family.

The protein localises to the mitochondrion inner membrane. The catalysed reaction is a ubiquinone + NADH + 5 H(+)(in) = a ubiquinol + NAD(+) + 4 H(+)(out). In terms of biological role, core subunit of the mitochondrial membrane respiratory chain NADH dehydrogenase (Complex I) that is believed to belong to the minimal assembly required for catalysis. Complex I functions in the transfer of electrons from NADH to the respiratory chain. The immediate electron acceptor for the enzyme is believed to be ubiquinone. This chain is NADH-ubiquinone oxidoreductase chain 5, found in Caenorhabditis elegans.